A 98-amino-acid chain; its full sequence is Leydig cell tumor 10 kDa protein homolog (98 aa).

2 disordered regions span residues 1 to 38 (MAQGQRKFQAQKPAKSKAAAAAASARNRGPRKGGRVIA) and 73 to 98 (SLPKKLALLKASTKKKEASSSTKMPA). Over residues 16–25 (SKAAAAAASA) the composition is skewed to low complexity. Positions 28-38 (RGPRKGGRVIA) are enriched in basic residues. The span at 73-83 (SLPKKLALLKA) shows a compositional bias: low complexity.

This sequence belongs to the UPF0390 family.

In terms of biological role, may have a potential role in hypercalcemia of malignancy. The chain is Leydig cell tumor 10 kDa protein homolog from Bos taurus (Bovine).